The following is a 337-amino-acid chain: Arylacetonitrilase (337 aa).

The region spanning 7-278 is the CN hydrolase domain; that stretch reads VRVAVTQHEP…EGFVYADLDL (272 aa). Glu47 (proton acceptor) is an active-site residue. Lys127 is a catalytic residue. The Nucleophile role is filled by Cys162. The segment at 311-337 is disordered; it reads QHRPEGQADNAAYGLDVPSGLVEEEGA.

This sequence belongs to the carbon-nitrogen hydrolase superfamily. Nitrilase family.

It carries out the reaction a nitrile + 2 H2O = a carboxylate + NH4(+). It catalyses the reaction 4-chlorophenylacetonitrile + 2 H2O = 4-chlorophenylacetate + NH4(+). Nitrilase that hydrolyzes preferentially phenylacetonitrile, but also (R,S)-mandelonitrile, and 2-phenylpropionitrile. The protein is Arylacetonitrilase of Aspergillus niger (strain ATCC MYA-4892 / CBS 513.88 / FGSC A1513).